Reading from the N-terminus, the 963-residue chain is uncharacterized protein (963 aa).

Coiled-coil stretches lie at residues 176–236 and 373–467; these read NGRN…HIRM and DYEW…KKTV. Residues 468-488 traverse the membrane as a helical segment; sequence IAAGMLFIVLFSLLQQWIPAI. Coiled coils occupy residues 536-570 and 647-789; these read RNKQ…AEMA and ALHT…LEAS.

The protein resides in the cell membrane. This is an uncharacterized protein from Bacillus subtilis (strain 168).